We begin with the raw amino-acid sequence, 66 residues long: Large ribosomal subunit protein bL35 (66 aa).

Over residues 1–16 the composition is skewed to basic residues; sequence MPKQKTHRASAKRFKR. Residues 1-20 are disordered; it reads MPKQKTHRASAKRFKRTGNG.

It belongs to the bacterial ribosomal protein bL35 family.

The protein is Large ribosomal subunit protein bL35 of Lactococcus lactis subsp. lactis (strain IL1403) (Streptococcus lactis).